We begin with the raw amino-acid sequence, 408 residues long: tRNA-specific 2-thiouridylase MnmA (408 aa).

ATP-binding positions include 27–34 and Leu53; that span reads AMSGGVDS. The active-site Nucleophile is the Cys121. Cys121 and Cys222 are joined by a disulfide. Residue Gly145 participates in ATP binding. The tract at residues 172 to 174 is interaction with tRNA; sequence RDQ. Catalysis depends on Cys222, which acts as the Cysteine persulfide intermediate.

It belongs to the MnmA/TRMU family.

Its subcellular location is the cytoplasm. It catalyses the reaction S-sulfanyl-L-cysteinyl-[protein] + uridine(34) in tRNA + AH2 + ATP = 2-thiouridine(34) in tRNA + L-cysteinyl-[protein] + A + AMP + diphosphate + H(+). Catalyzes the 2-thiolation of uridine at the wobble position (U34) of tRNA, leading to the formation of s(2)U34. The sequence is that of tRNA-specific 2-thiouridylase MnmA from Rhizobium etli (strain ATCC 51251 / DSM 11541 / JCM 21823 / NBRC 15573 / CFN 42).